Reading from the N-terminus, the 534-residue chain is CTP synthase (534 aa).

The tract at residues 1–265 is amidoligase domain; that stretch reads MKYIIVTGGV…SNYLLKKLIL (265 aa). Serine 12 lines the CTP pocket. UTP is bound at residue serine 12. 13–18 contributes to the ATP binding site; the sequence is GLGKGI. Tyrosine 53 is an L-glutamine binding site. Residue aspartate 70 participates in ATP binding. 2 residues coordinate Mg(2+): aspartate 70 and glutamate 140. CTP-binding positions include 147–149, 186–191, and lysine 222; these read DIE and KTKPTQ. UTP contacts are provided by residues 186-191 and lysine 222; that span reads KTKPTQ. A Glutamine amidotransferase type-1 domain is found at 289-530; that stretch reads NVAIVGKYTH…MGAMLKKSKE (242 aa). Position 352 (glycine 352) interacts with L-glutamine. The active-site Nucleophile; for glutamine hydrolysis is cysteine 379. L-glutamine is bound by residues 380 to 383, glutamate 403, and arginine 460; that span reads LGMQ. Active-site residues include histidine 503 and glutamate 505.

Belongs to the CTP synthase family. In terms of assembly, homotetramer.

The enzyme catalyses UTP + L-glutamine + ATP + H2O = CTP + L-glutamate + ADP + phosphate + 2 H(+). The catalysed reaction is L-glutamine + H2O = L-glutamate + NH4(+). It carries out the reaction UTP + NH4(+) + ATP = CTP + ADP + phosphate + 2 H(+). It participates in pyrimidine metabolism; CTP biosynthesis via de novo pathway; CTP from UDP: step 2/2. Allosterically activated by GTP, when glutamine is the substrate; GTP has no effect on the reaction when ammonia is the substrate. The allosteric effector GTP functions by stabilizing the protein conformation that binds the tetrahedral intermediate(s) formed during glutamine hydrolysis. Inhibited by the product CTP, via allosteric rather than competitive inhibition. Its function is as follows. Catalyzes the ATP-dependent amination of UTP to CTP with either L-glutamine or ammonia as the source of nitrogen. Regulates intracellular CTP levels through interactions with the four ribonucleotide triphosphates. In Methanococcoides burtonii (strain DSM 6242 / NBRC 107633 / OCM 468 / ACE-M), this protein is CTP synthase.